Here is a 484-residue protein sequence, read N- to C-terminus: 1,3-beta-glucanosyltransferase GAS5 (484 aa).

An N-terminal signal peptide occupies residues 1 to 19 (MLLRSLTSAFVLSAGLAQA). N-linked (GlcNAc...) asparagine glycosylation is found at Asn24 and Asn60. A disulfide bond links Cys71 and Cys100. Positions 89, 159, and 160 each coordinate (1,3-beta-D-glucosyl)n. Residue Glu160 is the Proton donor of the active site. N-linked (GlcNAc...) asparagine glycosylation is present at Asn166. Residues Asp201 and Arg206 each coordinate (1,3-beta-D-glucosyl)n. 2 disulfide bridges follow: Cys215–Cys348 and Cys234–Cys265. The active-site Nucleophile is the Glu262. Tyr295 is a (1,3-beta-D-glucosyl)n binding site. Asn299, Asn344, and Asn359 each carry an N-linked (GlcNAc...) asparagine glycan. Residues 383-462 (TGIATQQSCD…SSQSSSKSKG (80 aa)) form a disordered region. Residues 394-404 (KDDDDEEDDDT) are compositionally biased toward acidic residues. Positions 405 to 462 (SSSSSSSSSSSSSASSSSESSSSTSKASSSSPSASETSLLKSAASATSSSQSSSKSKG) are enriched in low complexity. Residue Gly462 is the site of GPI-anchor amidated glycine attachment. Residues 463 to 484 (AAGIIEIPLIFRALAELYNLVL) constitute a propeptide, removed in mature form.

The protein belongs to the glycosyl hydrolase 72 family. Post-translationally, the GPI-anchor is attached to the protein in the endoplasmic reticulum and serves to target the protein to the cell surface. There, the glucosamine-inositol phospholipid moiety is cleaved off and the GPI-modified mannoprotein is covalently attached via its lipidless GPI glycan remnant to the 1,6-beta-glucan of the outer cell wall layer.

The protein localises to the secreted. Its subcellular location is the cell wall. It is found in the membrane. Functionally, splits internally a 1,3-beta-glucan molecule and transfers the newly generated reducing end (the donor) to the non-reducing end of another 1,3-beta-glucan molecule (the acceptor) forming a 1,3-beta linkage, resulting in the elongation of 1,3-beta-glucan chains in the cell wall. Involved in cell wall biosynthesis and morphogenesis. The sequence is that of 1,3-beta-glucanosyltransferase GAS5 (GAS5) from Saccharomyces cerevisiae (strain ATCC 204508 / S288c) (Baker's yeast).